The primary structure comprises 183 residues: Ribosome-binding factor A (183 aa).

The disordered stretch occupies residues 132 to 183 (PAGEADPYRDNGSVAQSPAPGGLGIRTSDGPEAVEAPLTCGGDTGDDDRPKE).

The protein belongs to the RbfA family. Monomer. Binds 30S ribosomal subunits, but not 50S ribosomal subunits or 70S ribosomes.

The protein localises to the cytoplasm. One of several proteins that assist in the late maturation steps of the functional core of the 30S ribosomal subunit. Associates with free 30S ribosomal subunits (but not with 30S subunits that are part of 70S ribosomes or polysomes). Required for efficient processing of 16S rRNA. May interact with the 5'-terminal helix region of 16S rRNA. The protein is Ribosome-binding factor A of Mycobacterium tuberculosis (strain ATCC 25177 / H37Ra).